The sequence spans 88 residues: Small ribosomal subunit protein bS20 (88 aa).

The segment at 1-25 (MANTAQALKRIRQTNKARAQNASQR) is disordered. The segment covering 16–25 (KARAQNASQR) has biased composition (polar residues).

Belongs to the bacterial ribosomal protein bS20 family.

In terms of biological role, binds directly to 16S ribosomal RNA. The protein is Small ribosomal subunit protein bS20 of Dichelobacter nodosus (strain VCS1703A).